We begin with the raw amino-acid sequence, 208 residues long: Octanoyltransferase (208 aa).

The BPL/LPL catalytic domain maps to 30-208 (GTASEAVFIL…ILKQEFYKIF (179 aa)). Substrate-binding positions include 69 to 76 (RGGKFTYH), 142 to 144 (SIG), and 155 to 157 (GVA). Cys-173 acts as the Acyl-thioester intermediate in catalysis.

The protein belongs to the LipB family.

The protein localises to the cytoplasm. It carries out the reaction octanoyl-[ACP] + L-lysyl-[protein] = N(6)-octanoyl-L-lysyl-[protein] + holo-[ACP] + H(+). It participates in protein modification; protein lipoylation via endogenous pathway; protein N(6)-(lipoyl)lysine from octanoyl-[acyl-carrier-protein]: step 1/2. Its function is as follows. Catalyzes the transfer of endogenously produced octanoic acid from octanoyl-acyl-carrier-protein onto the lipoyl domains of lipoate-dependent enzymes. Lipoyl-ACP can also act as a substrate although octanoyl-ACP is likely to be the physiological substrate. The chain is Octanoyltransferase from Orientia tsutsugamushi (strain Ikeda) (Rickettsia tsutsugamushi).